A 1719-amino-acid chain; its full sequence is Cilia- and flagella-associated protein 43 (1719 aa).

Residues 94 to 120 are disordered; that stretch reads VREEGAGGGADKPSGSGAVSGKQQSSG. 6 WD repeats span residues 122–165, 174–214, 226–263, 308–345, 413–452, and 513–552; these read SVVL…GRCR, SSTS…EKAV, PAGA…PLQL, TSGA…AAAI, CHVG…LLGR, and LHSA…GRVR. The tract at residues 569 to 596 is disordered; that stretch reads TWPRSDGGSGAASGHAQAGPVSTTSAEG. WD repeat units lie at residues 697–736 and 749–788; these read AHAR…LAAQ and ITAG…AVAN. A disordered region spans residues 1022–1045; sequence RAKQEAARKADEDAAKRSAKDNAG. A WD 9 repeat occupies 1073–1114; sequence PKPAWLVALGVEPDAVNPKLITEEQNRELKEWQAKEKSLQEE. Disordered stretches follow at residues 1220–1269, 1277–1296, and 1325–1372; these read MPGG…AAAA, ATAA…GAAG, and TLNP…AAAA. Gly residues predominate over residues 1221–1233; it reads PGGGAIGAAGGHQ. The segment covering 1257–1269 has biased composition (low complexity); sequence ASLAHSPSGAAAA. Residues 1344–1358 are compositionally biased toward low complexity; it reads SSALHPSHSHASVHG. Coiled coils occupy residues 1524 to 1609 and 1651 to 1679; these read AAQW…RSAQ and HKKL…RLRT. The disordered stretch occupies residues 1685–1719; the sequence is ESGAVAGMPSPPRRLPPDIKLLAGSPSSSSVAGRT. The span at 1709 to 1719 shows a compositional bias: polar residues; it reads SPSSSSVAGRT.

Belongs to the CFAP43 family.

The protein resides in the cell projection. Its subcellular location is the cilium. It localises to the flagellum. It is found in the cytoplasm. The protein localises to the cytoskeleton. The protein resides in the flagellum axoneme. Functionally, flagellar protein involved in flagellum axoneme organization and function. The sequence is that of Cilia- and flagella-associated protein 43 from Chlamydomonas reinhardtii (Chlamydomonas smithii).